A 92-amino-acid polypeptide reads, in one-letter code: UPF0473 protein Cbei_1107 (92 aa).

The protein belongs to the UPF0473 family.

The chain is UPF0473 protein Cbei_1107 from Clostridium beijerinckii (strain ATCC 51743 / NCIMB 8052) (Clostridium acetobutylicum).